The sequence spans 282 residues: Transcription repressor OFP18 (282 aa).

The interval 1 to 85 (MVRKMKLPFL…YSSFSSTSHA (85 aa)) is disordered. Over residues 15 to 35 (SSSSFSSNSSSSSSSWPWPSS) the composition is skewed to low complexity. A compositionally biased stretch (polar residues) spans 36 to 47 (HQQNLKTISSKA). Low complexity predominate over residues 66–85 (SFSSSPSSSSYSSFSSTSHA). Positions 139-199 (LSLESNDPYT…FAAFVDLVLN (61 aa)) constitute an OVATE domain.

In terms of tissue distribution, expressed in roots and shoots.

Its subcellular location is the nucleus. Its function is as follows. Transcriptional repressor that regulates multiple aspects of plant growth and development through the regulation of BEL1-LIKE (BLH) and KNOX TALE (KNAT) homeodomain transcription factors. The polypeptide is Transcription repressor OFP18 (OFP18) (Arabidopsis thaliana (Mouse-ear cress)).